We begin with the raw amino-acid sequence, 320 residues long: Lipoyl synthase (320 aa).

The [4Fe-4S] cluster site is built by cysteine 67, cysteine 72, cysteine 78, cysteine 93, cysteine 97, cysteine 100, and serine 307. The 218-residue stretch at 79-296 folds into the Radical SAM core domain; that stretch reads FNHGTATFMI…RDKANEMGFE (218 aa).

Belongs to the radical SAM superfamily. Lipoyl synthase family. The cofactor is [4Fe-4S] cluster.

The protein localises to the cytoplasm. It carries out the reaction [[Fe-S] cluster scaffold protein carrying a second [4Fe-4S](2+) cluster] + N(6)-octanoyl-L-lysyl-[protein] + 2 oxidized [2Fe-2S]-[ferredoxin] + 2 S-adenosyl-L-methionine + 4 H(+) = [[Fe-S] cluster scaffold protein] + N(6)-[(R)-dihydrolipoyl]-L-lysyl-[protein] + 4 Fe(3+) + 2 hydrogen sulfide + 2 5'-deoxyadenosine + 2 L-methionine + 2 reduced [2Fe-2S]-[ferredoxin]. Its pathway is protein modification; protein lipoylation via endogenous pathway; protein N(6)-(lipoyl)lysine from octanoyl-[acyl-carrier-protein]: step 2/2. In terms of biological role, catalyzes the radical-mediated insertion of two sulfur atoms into the C-6 and C-8 positions of the octanoyl moiety bound to the lipoyl domains of lipoate-dependent enzymes, thereby converting the octanoylated domains into lipoylated derivatives. The protein is Lipoyl synthase of Haemophilus influenzae (strain PittGG).